A 235-amino-acid polypeptide reads, in one-letter code: Phosphoribosylaminoimidazole-succinocarboxamide synthase (235 aa).

Belongs to the SAICAR synthetase family.

The enzyme catalyses 5-amino-1-(5-phospho-D-ribosyl)imidazole-4-carboxylate + L-aspartate + ATP = (2S)-2-[5-amino-1-(5-phospho-beta-D-ribosyl)imidazole-4-carboxamido]succinate + ADP + phosphate + 2 H(+). It functions in the pathway purine metabolism; IMP biosynthesis via de novo pathway; 5-amino-1-(5-phospho-D-ribosyl)imidazole-4-carboxamide from 5-amino-1-(5-phospho-D-ribosyl)imidazole-4-carboxylate: step 1/2. In Streptococcus thermophilus (strain ATCC BAA-250 / LMG 18311), this protein is Phosphoribosylaminoimidazole-succinocarboxamide synthase.